We begin with the raw amino-acid sequence, 250 residues long: Proteasome subunit alpha type-4-1 (250 aa).

The protein belongs to the peptidase T1A family. As to quaternary structure, the 26S proteasome consists of a 20S proteasome core and two 19S regulatory subunits. The 20S proteasome core is composed of 28 subunits that are arranged in four stacked rings, resulting in a barrel-shaped structure. The two end rings are each formed by seven alpha subunits, and the two central rings are each formed by seven beta subunits. The catalytic chamber with the active sites is on the inside of the barrel.

It is found in the cytoplasm. The protein localises to the nucleus. Functionally, the proteasome is a multicatalytic proteinase complex which is characterized by its ability to cleave peptides with Arg, Phe, Tyr, Leu, and Glu adjacent to the leaving group at neutral or slightly basic pH. The proteasome has an ATP-dependent proteolytic activity. In Oryza sativa subsp. indica (Rice), this protein is Proteasome subunit alpha type-4-1.